The sequence spans 117 residues: UPF0102 protein Ssed_4252 (117 aa).

The protein belongs to the UPF0102 family.

In Shewanella sediminis (strain HAW-EB3), this protein is UPF0102 protein Ssed_4252.